A 343-amino-acid polypeptide reads, in one-letter code: Olfactory receptor 1E3 (343 aa).

Topologically, residues 1–28 (MMKKNQTMISEFLLLGLPIQPEQQNLFY) are extracellular. A glycan (N-linked (GlcNAc...) asparagine) is linked at N5. The chain crosses the membrane as a helical span at residues 29–49 (ALFLAVYLTTLLGNLLVIVLI). The Cytoplasmic portion of the chain corresponds to 50-107 (RLDSHLHMPMYLCLSNLSFSDLCFSSVTMPKLLQNMQSQNPSIPFADCLAQMYFHLFY). C97 and C179 are disulfide-bonded. A helical membrane pass occupies residues 108–128 (GVLESFLLVVMAYHCYVAICF). At 129-141 (PLHYTTIMSPKCC) the chain is on the extracellular side. A helical transmembrane segment spans residues 142–162 (LGLLTLSWLLTTAHATLHTLL). The Cytoplasmic segment spans residues 163–195 (MARLSFCAENVIPHFFCDTSTLLKLACSNTQVN). A helical membrane pass occupies residues 196–216 (GWVMFFMGGLILVIPFLLLIM). Residues 217-242 (SCARIVSTILRVPSTGGIQKAFSTCG) lie on the Extracellular side of the membrane. The helical transmembrane segment at 243–263 (PHLSVVSLFYGTIIGLYLCPL) threads the bilayer. The Cytoplasmic segment spans residues 264-271 (TNHNTVKD). A helical transmembrane segment spans residues 272 to 292 (TVMAVMYTGVTHMLNPFIYSL). Residues 293–310 (RNRDMRGNPGQSLQHKEN) are Extracellular-facing. A helical transmembrane segment spans residues 311–331 (FFVFKIVIVGILPLLNLVGVV). Topologically, residues 332-343 (KLIMKYHSKSVA) are cytoplasmic.

It belongs to the G-protein coupled receptor 1 family.

Its subcellular location is the cell membrane. Functionally, odorant receptor. The protein is Olfactory receptor 1E3 (OR1E3) of Homo sapiens (Human).